A 72-amino-acid polypeptide reads, in one-letter code: DNA-directed RNA polymerase subunit epsilon (72 aa).

It belongs to the RNA polymerase subunit epsilon family. RNAP is composed of a core of 2 alpha, a beta and a beta' subunit. The core is associated with a delta subunit, and at least one of epsilon or omega. When a sigma factor is associated with the core the holoenzyme is formed, which can initiate transcription.

It catalyses the reaction RNA(n) + a ribonucleoside 5'-triphosphate = RNA(n+1) + diphosphate. In terms of biological role, a non-essential component of RNA polymerase (RNAP). This Staphylococcus haemolyticus (strain JCSC1435) protein is DNA-directed RNA polymerase subunit epsilon.